The following is a 231-amino-acid chain: ATP synthase subunit a (231 aa).

5 helical membrane-spanning segments follow: residues glycine 14 to valine 34, tyrosine 78 to isoleucine 98, serine 107 to isoleucine 127, methionine 174 to leucine 194, and leucine 196 to alanine 216.

The protein belongs to the ATPase A chain family. As to quaternary structure, F-type ATPases have 2 components, CF(1) - the catalytic core - and CF(0) - the membrane proton channel. CF(1) has five subunits: alpha(3), beta(3), gamma(1), delta(1), epsilon(1). CF(0) has three main subunits: a(1), b(2) and c(9-12). The alpha and beta chains form an alternating ring which encloses part of the gamma chain. CF(1) is attached to CF(0) by a central stalk formed by the gamma and epsilon chains, while a peripheral stalk is formed by the delta and b chains.

It localises to the cell inner membrane. Functionally, key component of the proton channel; it plays a direct role in the translocation of protons across the membrane. The polypeptide is ATP synthase subunit a (Albidiferax ferrireducens (strain ATCC BAA-621 / DSM 15236 / T118) (Rhodoferax ferrireducens)).